The sequence spans 265 residues: Glutamate racemase (265 aa).

Residues 9–10 and 41–42 contribute to the substrate site; these read DS and YG. Cys72 serves as the catalytic Proton donor/acceptor. Residue 73–74 participates in substrate binding; that stretch reads NT. The Proton donor/acceptor role is filled by Cys183. 184–185 lines the substrate pocket; sequence TH.

The protein belongs to the aspartate/glutamate racemases family.

It catalyses the reaction L-glutamate = D-glutamate. Its pathway is cell wall biogenesis; peptidoglycan biosynthesis. In terms of biological role, provides the (R)-glutamate required for cell wall biosynthesis. In Lysinibacillus sphaericus (Bacillus sphaericus), this protein is Glutamate racemase.